A 1272-amino-acid chain; its full sequence is Myosin-3 (1272 aa).

The interval 1–20 (MAVIKKGARRKDVKEPKKRS) is disordered. The Myosin motor domain maps to 36–715 (VGISDLTLLS…SLFALEDMRD (680 aa)). 129–136 (GESGAGKT) is an ATP binding site. At Ser357 the chain carries Phosphoserine. Residues 588–610 (ANELVETLSKAEPSYIRTIKPNQ) form an actin-binding region. IQ domains lie at 719-739 (YNMA…RIDA) and 740-765 (AIKI…YGTK). The TH1 domain maps to 771–961 (KERRSMSLLG…TIYVRRGHPA (191 aa)). 3 disordered regions span residues 951 to 1015 (STIY…QKPV), 1029 to 1141 (YNPK…SELP), and 1217 to 1272 (VQFG…DDDW). A compositionally biased stretch (basic residues) spans 980 to 1000 (IKSKKSKHKSTHKHTHSHRSH). Residues 1066 to 1078 (KKASSSHKSSSAK) show a composition bias toward low complexity. Basic and acidic residues predominate over residues 1089 to 1098 (GVEKNKEPLK). The segment covering 1109–1118 (PIPPPPPPMG) has biased composition (pro residues). The region spanning 1120–1182 (PKDPKFEAAY…PTAYMTPYKD (63 aa)) is the SH3 domain. Positions 1217-1236 (VQFGSATVGPTSDNQSNPVG) are enriched in polar residues. The segment covering 1258–1272 (ADDDDNDDGDDDDDW) has biased composition (acidic residues).

It belongs to the TRAFAC class myosin-kinesin ATPase superfamily. Myosin family. As to quaternary structure, interacts (via myosin motor domain) with SHE4; this interaction is important for proper localization and may regulate the interaction of the motor domain with actin. Interacts (via SH3 domain) with VRP1; this interaction is required for localization to sites of polarized growth and may regulate the interaction of the tail domain with actin. Interacts (via SH3 domain) with PAN1; this interaction is important for late stages of endocytopsis. Interacts (via SH3 domain) with BBC1 and LAS17. Interacts (via C-terminal acidic tail) with ARC19 and ARC40; ARC19 and ARC40 are Arp2/3 complex subunits. Phosphorylation of the TEDS site (Ser-357) is required for the polarization of the actin cytoskeleton and for ligand-induced, but not for constitutive internalization of STE2. Phosphorylation probably activates the myosin-I ATPase. Ser-357 is phosphorylated by CLA4 and STE20 in vitro.

The protein localises to the cytoplasm. It localises to the cytoskeleton. It is found in the actin patch. One of two redundant type-I myosins implicated in the organization of the actin cytoskeleton. Required for proper actin cytoskeleton polarization and for the internalization step in endocytosis. At the cell cortex, assembles in patch-like structures together with proteins from the actin-polymerizing machinery and promotes actin assembly. Functions redundantly with LAS17 as actin nucleation-promoting factor (NPF) for the Arp2/3 complex. Motor domain phosphorylation by PAK kinases CLA4 and STE20 promotes CDC42-regulated actin assembly. Functions together with the NPF PAN1 in late stages of endocytosis. Motor domain phosphorylation by PDK1 kinases PKH1 and PKH2, and by SGK kinases YPK1 and YPK2, promotes ligand-induced, but not constitutive endocytosis of the G protein-coupled receptor STE2. The chain is Myosin-3 (MYO3) from Saccharomyces cerevisiae (strain ATCC 204508 / S288c) (Baker's yeast).